Reading from the N-terminus, the 1940-residue chain is Myosin-13 (1940 aa).

The Myosin N-terminal SH3-like domain occupies 33–82 (DSKKACFAMDDKEMYVKGMIQSRENDKVTVKTLDDRTLTLNSDQVFPMNP). Residues 86 to 782 (DKIEDMAMMT…LLGLLEEMRD (697 aa)) form the Myosin motor domain. The residue at position 130 (Lys130) is an N6,N6,N6-trimethyllysine. ATP is bound at residue 179–186 (GESGAGKT). Actin-binding regions lie at residues 659–681 (LNKL…IPNE) and 761–775 (RFGH…GLLG). In terms of domain architecture, IQ spans 785-814 (LVTLMTRTQAICRGYLMRVEFKKMMERRES). Residues 843–1940 (LLKSAEAERE…RDVGAQKMEE (1098 aa)) adopt a coiled-coil conformation. Residues 1886-1940 (RQAEEAEEQANTQMSKCRRVQHELEEAEERADIAESQVNKLRAKSRDVGAQKMEE) are disordered. Residues 1929-1940 (KSRDVGAQKMEE) are compositionally biased toward basic and acidic residues.

Belongs to the TRAFAC class myosin-kinesin ATPase superfamily. Myosin family. In terms of assembly, muscle myosin is a hexameric protein that consists of 2 heavy chain subunits (MHC), 2 alkali light chain subunits (MLC) and 2 regulatory light chain subunits (MLC-2).

The protein resides in the cytoplasm. It is found in the myofibril. Its function is as follows. Fast twitching myosin mediating the high-velocity and low-tension contractions of specific striated muscles. This chain is Myosin-13 (MYH13), found in Canis lupus familiaris (Dog).